The following is a 234-amino-acid chain: Demethylmenaquinone methyltransferase (234 aa).

S-adenosyl-L-methionine contacts are provided by residues T58, D79, and 104–105 (NA).

Belongs to the class I-like SAM-binding methyltransferase superfamily. MenG/UbiE family.

The enzyme catalyses a 2-demethylmenaquinol + S-adenosyl-L-methionine = a menaquinol + S-adenosyl-L-homocysteine + H(+). Its pathway is quinol/quinone metabolism; menaquinone biosynthesis; menaquinol from 1,4-dihydroxy-2-naphthoate: step 2/2. Methyltransferase required for the conversion of demethylmenaquinol (DMKH2) to menaquinol (MKH2). This is Demethylmenaquinone methyltransferase from Lysinibacillus sphaericus (strain C3-41).